A 216-amino-acid chain; its full sequence is U1 small nuclear ribonucleoprotein C (216 aa).

The Matrin-type zinc finger occupies 4 to 36 (FFCDYCDVYLTHDSMSVRKAHNSGRNHLRNVVD). 2 disordered regions span residues 70-89 (PQNQPGGVPPGLGFPPPGAG) and 125-216 (PGGI…ADKR). 2 stretches are compositionally biased toward pro residues: residues 140–149 (PPMPPFPGMP) and 157–204 (GVPP…PPFG).

Belongs to the U1 small nuclear ribonucleoprotein C family. U1 snRNP is composed of the 7 core Sm proteins B/B', D1, D2, D3, E, F and G that assemble in a heptameric protein ring on the Sm site of the small nuclear RNA to form the core snRNP, and at least 3 U1 snRNP-specific proteins U1-70K, U1-A and U1-C. U1-C interacts with U1 snRNA and the 5' splice-site region of the pre-mRNA.

It localises to the nucleus. Component of the spliceosomal U1 snRNP, which is essential for recognition of the pre-mRNA 5' splice-site and the subsequent assembly of the spliceosome. U1-C is directly involved in initial 5' splice-site recognition for both constitutive and regulated alternative splicing. The interaction with the 5' splice-site seems to precede base-pairing between the pre-mRNA and the U1 snRNA. Stimulates commitment or early (E) complex formation by stabilizing the base pairing of the 5' end of the U1 snRNA and the 5' splice-site region. The chain is U1 small nuclear ribonucleoprotein C from Neurospora crassa (strain ATCC 24698 / 74-OR23-1A / CBS 708.71 / DSM 1257 / FGSC 987).